A 1453-amino-acid chain; its full sequence is Collagen alpha-1(I) chain (1453 aa).

An N-terminal signal peptide occupies residues 1–22 (MFSFVDLRLLLLLGATALLTHG). Positions 23-151 (QEDIPEVSCI…PPGLGGNFAS (129 aa)) are cleaved as a propeptide — N-terminal propeptide. The region spanning 29 to 87 (VSCIHNGLRVPNGETWKPDVCLICICHNGTAVCDGVLCKEDLDCPNPQKREGECCPFCP) is the VWFC domain. A glycan (N-linked (GlcNAc...) asparagine) is linked at Asn-56. Residues 97–1206 (VIGVEGPKGD…KSQDGGRYYR (1110 aa)) form a disordered region. Pro residues-rich tracts occupy residues 109–118 (PQGPRGPVGP) and 128–143 (PGLP…PGPP). At Gln-152 the chain carries Pyrrolidone carboxylic acid. The nonhelical region (N-terminal) stretch occupies residues 152-167 (QMSYGYDEKSAGVSVP). The residue at position 160 (Lys-160) is an Allysine. A Phosphoserine modification is found at Ser-161. Residues 168-1181 (GPMGPSGPRG…PGPPGPPGPP (1014 aa)) are triple-helical region. A 4-hydroxyproline mark is found at Pro-179, Pro-182, Pro-185, Pro-194, Pro-197, Pro-200, Pro-215, Pro-230, Pro-236, Pro-245, and Pro-251. Residues 187-206 (PQGFQGPPGEPGEPGASGPM) are compositionally biased toward low complexity. Positions 218-232 (NGDDGEAGKPGRPGE) are enriched in basic and acidic residues. Lys-254 is modified (5-hydroxylysine; alternate). A glycan (O-linked (Gal...) hydroxylysine; alternate) is linked at Lys-254. Ser-260 bears the Phosphoserine mark. 4-hydroxyproline is present on residues Pro-278, Pro-281, Pro-287, Pro-296, and Pro-302. A compositionally biased stretch (low complexity) spans 307-320 (SAGARGNDGAVGAA). The segment covering 322–334 (PPGPTGPTGPPGF) has biased composition (pro residues). 11 positions are modified to 4-hydroxyproline: Pro-323, Pro-332, Pro-335, Pro-362, Pro-365, Pro-377, Pro-383, Pro-392, Pro-398, Pro-401, and Pro-416. Residues 335-361 (PGAAGAKGEAGPQGARGSEGPQGVRGE) are compositionally biased toward low complexity. Low complexity predominate over residues 368–418 (AGAAGPAGNPGADGQPGAKGANGAPGIAGAPGFPGARGPSGPQGPSGAPGP). Lys-419 is subject to 5-hydroxylysine. 8 positions are modified to 4-hydroxyproline: Pro-425, Pro-428, Pro-440, Pro-449, Pro-464, Pro-470, Pro-479, and Pro-485. Over residues 474 to 483 (GERGGPGSRG) the composition is skewed to gly residues. Lys-494 is modified (5-hydroxylysine). 28 positions are modified to 4-hydroxyproline: Pro-503, Pro-512, Pro-518, Pro-524, Pro-533, Pro-536, Pro-545, Pro-554, Pro-560, Pro-572, Pro-581, Pro-590, Pro-593, Pro-611, Pro-629, Pro-635, Pro-641, Pro-647, Pro-653, Pro-659, Pro-671, Pro-680, Pro-692, Pro-704, Pro-707, Pro-713, Pro-719, and Pro-728. Residues 527–566 (KGLTGSPGSPGPDGKTGPPGPAGQDGRPGPAGPPGARGQA) are compositionally biased toward low complexity. Residues 623 to 650 (QGPAGSPGFQGLPGPAGPPGEAGKPGEQ) show a composition bias toward low complexity. Low complexity-rich tracts occupy residues 685 to 695 (PRGNNGAPGND) and 703 to 716 (APGA…PGLQ). Positions 734–736 (RGD) match the Cell attachment site motif. Lys-740 bears the 5-hydroxylysine mark. Residues Pro-746, Pro-761, and Pro-767 each carry the 4-hydroxyproline modification. The span at 773 to 787 (TGPSGPAGPTGARGA) shows a compositional bias: low complexity. The residue at position 776 (Ser-776) is a Phosphoserine. Residues Pro-788, Pro-794, Pro-797, Pro-806, Pro-812, Pro-830, Pro-839, and Pro-848 each carry the 4-hydroxyproline modification. Positions 800-815 (AGFAGPPGADGQPGAK) are enriched in low complexity. Positions 829–841 (PPGPAGPAGPPGP) are enriched in pro residues. A compositionally biased stretch (low complexity) spans 842 to 872 (IGNVGAPGPKGSRGAAGPPGATGFPGAAGRV). Lys-851 is modified (5-hydroxylysine). Residues Pro-860 and Pro-866 each carry the 4-hydroxyproline modification. At Pro-874 the chain carries 3-hydroxyproline. 4-hydroxyproline is present on residues Pro-875, Pro-884, Pro-887, Pro-908, Pro-917, Pro-926, Pro-935, Pro-953, Pro-962, Pro-965, Pro-971, Pro-986, Pro-992, Pro-998, Pro-1007, and Pro-1013. A compositionally biased stretch (low complexity) spans 901-910 (ETGPAGRPGE). Positions 920–935 (AGEKGSPGADGPAGSP) are enriched in low complexity. Positions 985 to 995 (PPGPMGPPGLA) are enriched in pro residues. Residues 997-1012 (PPGESGREGSPGAEGS) show a composition bias toward low complexity. Position 1022 is a 5-hydroxylysine (Lys-1022). Pro residues predominate over residues 1031–1046 (AGPPGAPGAPGAPGPV). Residues Pro-1034, Pro-1037, and Pro-1040 each carry the 4-hydroxyproline modification. Over residues 1067–1081 (IGPAGARGPAGPQGP) the composition is skewed to low complexity. Residues 1082–1084 (RGD) carry the Cell attachment site motif. A compositionally biased stretch (basic and acidic residues) spans 1082–1096 (RGDKGETGEQGDRGI). Lys-1085 carries the post-translational modification 5-hydroxylysine. Position 1097 is a 5-hydroxylysine; alternate (Lys-1097). Lys-1097 carries O-linked (Gal...) hydroxylysine; alternate glycosylation. Positions 1102–1148 (FSGLQGPPGSPGSPGEQGPSGASGPAGPRGPPGSAGSPGKDGLNGLP) are enriched in low complexity. Residues Pro-1109, Pro-1112, Pro-1115, Pro-1133, and Pro-1148 each carry the 4-hydroxyproline modification. 3-hydroxyproline is present on Pro-1153. A 4-hydroxyproline modification is found at Pro-1154. A compositionally biased stretch (pro residues) spans 1166-1181 (AGPPGPPGPPGPPGPP). Pro-1168 bears the 3-hydroxyproline mark. Pro-1169 carries the 4-hydroxyproline modification. Pro-1171 is modified (3-hydroxyproline). At Pro-1172 the chain carries 4-hydroxyproline. The residue at position 1174 (Pro-1174) is a 3-hydroxyproline. Pro-1175, Pro-1178, and Pro-1181 each carry 4-hydroxyproline. Residues 1176-1186 (GPPGPPSGGYD) form a major antigenic determinant (of neutral salt-extracted rat skin collagen) region. Positions 1182-1207 (SGGYDFSFLPQPPQEKSQDGGRYYRA) are nonhelical region (C-terminal). Lys-1197 carries the allysine modification. Over residues 1197–1206 (KSQDGGRYYR) the composition is skewed to basic and acidic residues. Residues 1208–1453 (DDANVVRDRD…GMDIGPACFV (246 aa)) constitute a propeptide, C-terminal propeptide. In terms of domain architecture, Fibrillar collagen NC1 spans 1218-1453 (LEVDTTLKSL…GMDIGPACFV (236 aa)). Disulfide bonds link Cys-1248–Cys-1280, Cys-1288–Cys-1451, and Cys-1359–Cys-1404. Asp-1266, Asn-1268, Gln-1269, Cys-1271, and Asp-1274 together coordinate Ca(2+). Asn-1354 carries N-linked (GlcNAc...) asparagine glycosylation.

It belongs to the fibrillar collagen family. As to quaternary structure, trimers of one alpha 2(I) and two alpha 1(I) chains. Interacts with MRC2. Interacts with TRAM2. Interacts with MFAP4 in a Ca (2+)-dependent manner. In terms of processing, contains mostly 4-hydroxyproline. Proline residues at the third position of the tripeptide repeating unit (G-X-Y) are hydroxylated in some or all of the chains. Post-translationally, contains 3-hydroxyproline at a few sites. This modification occurs on the first proline residue in the sequence motif Gly-Pro-Hyp, where Hyp is 4-hydroxyproline. Lysine residues at the third position of the tripeptide repeating unit (G-X-Y) are 5-hydroxylated in some or all of the chains. In terms of processing, O-glycosylated on hydroxylated lysine residues. The O-linked glycan consists of a Glc-Gal disaccharide. Forms the fibrils of tendon, ligaments and bones. In bones the fibrils are mineralized with calcium hydroxyapatite.

It localises to the secreted. The protein localises to the extracellular space. Its subcellular location is the extracellular matrix. Its function is as follows. Type I collagen is a member of group I collagen (fibrillar forming collagen). This chain is Collagen alpha-1(I) chain (Col1a1), found in Rattus norvegicus (Rat).